Here is a 130-residue protein sequence, read N- to C-terminus: Small ribosomal subunit protein uS9 (130 aa).

The protein belongs to the universal ribosomal protein uS9 family.

The chain is Small ribosomal subunit protein uS9 from Albidiferax ferrireducens (strain ATCC BAA-621 / DSM 15236 / T118) (Rhodoferax ferrireducens).